The primary structure comprises 340 residues: Transcription initiation factor IIB (340 aa).

The segment at 16 to 49 adopts a TFIIB-type zinc-finger fold; it reads VKMICSECREDPPNLVEEFSSGDTVCGSCGLVLG. Zn(2+) is bound by residues Cys-20, Cys-23, Cys-41, and Cys-44. Tandem repeats lie at residues 128 to 204 and 239 to 315.

Belongs to the TFIIB family. As to quaternary structure, associates with TFIID-IIA (DA complex) to form TFIID-IIA-IIB (DAB-complex) which is then recognized by polymerase II.

It localises to the nucleus. Its function is as follows. General factor that plays a major role in the activation of eukaryotic genes transcribed by RNA polymerase II. This chain is Transcription initiation factor IIB (sua7), found in Schizosaccharomyces pombe (strain 972 / ATCC 24843) (Fission yeast).